Consider the following 332-residue polypeptide: GTP 3',8-cyclase (332 aa).

Residues 9–234 (TFGRRISYLR…DSDHRTGGPS (226 aa)) enclose the Radical SAM core domain. Residue Arg-18 participates in GTP binding. 2 residues coordinate [4Fe-4S] cluster: Cys-25 and Cys-29. Tyr-31 contacts S-adenosyl-L-methionine. Cys-32 contacts [4Fe-4S] cluster. Arg-67 contributes to the GTP binding site. Gly-71 contributes to the S-adenosyl-L-methionine binding site. A GTP-binding site is contributed by Thr-100. An S-adenosyl-L-methionine-binding site is contributed by Ser-124. Residue Lys-160 coordinates GTP. Residue Met-194 participates in S-adenosyl-L-methionine binding. The [4Fe-4S] cluster site is built by Cys-257 and Cys-260. 262–264 (RVR) provides a ligand contact to GTP. [4Fe-4S] cluster is bound at residue Cys-274.

It belongs to the radical SAM superfamily. MoaA family. In terms of assembly, monomer and homodimer. The cofactor is [4Fe-4S] cluster.

It carries out the reaction GTP + AH2 + S-adenosyl-L-methionine = (8S)-3',8-cyclo-7,8-dihydroguanosine 5'-triphosphate + 5'-deoxyadenosine + L-methionine + A + H(+). Its pathway is cofactor biosynthesis; molybdopterin biosynthesis. In terms of biological role, catalyzes the cyclization of GTP to (8S)-3',8-cyclo-7,8-dihydroguanosine 5'-triphosphate. The protein is GTP 3',8-cyclase of Erythrobacter litoralis (strain HTCC2594).